The sequence spans 119 residues: Large ribosomal subunit protein uL18 (119 aa).

It belongs to the universal ribosomal protein uL18 family. Part of the 50S ribosomal subunit; part of the 5S rRNA/L5/L18/L25 subcomplex. Contacts the 5S and 23S rRNAs.

This is one of the proteins that bind and probably mediate the attachment of the 5S RNA into the large ribosomal subunit, where it forms part of the central protuberance. This chain is Large ribosomal subunit protein uL18, found in Helicobacter pylori (strain HPAG1).